A 198-amino-acid chain; its full sequence is Peptide deformylase (198 aa).

The Fe cation site is built by Cys123 and His170. Glu171 is a catalytic residue. Position 174 (His174) interacts with Fe cation.

Belongs to the polypeptide deformylase family. The cofactor is Fe(2+).

The enzyme catalyses N-terminal N-formyl-L-methionyl-[peptide] + H2O = N-terminal L-methionyl-[peptide] + formate. Functionally, removes the formyl group from the N-terminal Met of newly synthesized proteins. Requires at least a dipeptide for an efficient rate of reaction. N-terminal L-methionine is a prerequisite for activity but the enzyme has broad specificity at other positions. This Mycoplasmopsis pulmonis (strain UAB CTIP) (Mycoplasma pulmonis) protein is Peptide deformylase.